We begin with the raw amino-acid sequence, 476 residues long: tRNA (cytosine(72)-C(5))-methyltransferase NSUN6 (476 aa).

The PUA domain occupies 111–203 (QGEVIVGAQC…IGIRMTEPIY (93 aa)). Residues 242–248 (CAAPGGK), Asp-266, Asp-293, and Asp-323 contribute to the S-adenosyl-L-methionine site. Cys-373 serves as the catalytic Nucleophile. An N6-acetyllysine modification is found at Lys-419.

Belongs to the class I-like SAM-binding methyltransferase superfamily. RsmB/NOP family.

It is found in the cytoplasm. The enzyme catalyses cytidine(72) in tRNA(Thr) + S-adenosyl-L-methionine = 5-methylcytidine(72) in tRNA(Thr) + S-adenosyl-L-homocysteine + H(+). It catalyses the reaction cytidine(72) in tRNA(Cys) + S-adenosyl-L-methionine = 5-methylcytidine(72) in tRNA(Cys) + S-adenosyl-L-homocysteine + H(+). In terms of biological role, S-adenosyl-L-methionine-dependent methyltransferase that specifically methylates the C5 position of cytosine 72 in tRNA(Thr)(TGT) and tRNA(Cys)(GCA). In vitro also methylates tRNA(Thr)(AGT). Methylation requires, in the acceptor stem region, the presence of the 3'-CCA terminus, the target site C72, the discriminator base U73, and the second and third base pairs (2:71 and 3:70) in the tRNA substrates. The protein is tRNA (cytosine(72)-C(5))-methyltransferase NSUN6 of Mus musculus (Mouse).